The primary structure comprises 465 residues: Cysteine--tRNA ligase (465 aa).

Position 29 (C29) interacts with Zn(2+). The short motif at 31–41 (PTVYNYIHIGN) is the 'HIGH' region element. 3 residues coordinate Zn(2+): C209, H234, and E238. The 'KMSKS' region signature appears at 266–270 (KMSKS). Residue K269 participates in ATP binding. The residue at position 270 (S270) is a Phosphoserine.

It belongs to the class-I aminoacyl-tRNA synthetase family. Monomer. The cofactor is Zn(2+).

The protein localises to the cytoplasm. It catalyses the reaction tRNA(Cys) + L-cysteine + ATP = L-cysteinyl-tRNA(Cys) + AMP + diphosphate. The sequence is that of Cysteine--tRNA ligase from Bacillus cereus (strain AH187).